The chain runs to 490 residues: Katanin p60 ATPase-containing subunit A-like 1 (490 aa).

The residue at position 1 (Met1) is an N-acetylmethionine. The interval 96 to 182 is disordered; the sequence is PAVWPPPVPA…ASDGEIPKFD (87 aa). The segment covering 116–127 has biased composition (basic and acidic residues); the sequence is PNREVRPLRKEM. Low complexity predominate over residues 128–139; that stretch reads AGVGARGPVGRA. The span at 143 to 169 shows a compositional bias: basic and acidic residues; it reads SKSEKPSASRDKDCRARGRDDKGRKNM. Position 174 is a phosphoserine (Ser174). 248–255 is a binding site for ATP; the sequence is GPPGTGKT.

It belongs to the AAA ATPase family. Katanin p60 subunit A1 subfamily. A-like 1 sub-subfamily. Interacts with KATNB1 and KATNBL1.

It localises to the cytoplasm. It is found in the cytoskeleton. The protein localises to the spindle pole. Its subcellular location is the spindle. It carries out the reaction n ATP + n H2O + a microtubule = n ADP + n phosphate + (n+1) alpha/beta tubulin heterodimers.. Regulates microtubule dynamics in Sertoli cells, a process that is essential for spermiogenesis and male fertility. Severs microtubules in an ATP-dependent manner, promoting rapid reorganization of cellular microtubule arrays. Has microtubule-severing activity in vitro. The polypeptide is Katanin p60 ATPase-containing subunit A-like 1 (Oryctolagus cuniculus (Rabbit)).